A 647-amino-acid chain; its full sequence is Threonine--tRNA ligase (647 aa).

Positions 1–61 constitute a TGS domain; sequence MIKITFPDGA…TEDGAIEIVT (61 aa). The segment at 242 to 540 is catalytic; it reads DHRKLGKELD…LIENYKGAFP (299 aa). 3 residues coordinate Zn(2+): Cys-336, His-387, and His-517.

The protein belongs to the class-II aminoacyl-tRNA synthetase family. In terms of assembly, homodimer. The cofactor is Zn(2+).

It localises to the cytoplasm. The enzyme catalyses tRNA(Thr) + L-threonine + ATP = L-threonyl-tRNA(Thr) + AMP + diphosphate + H(+). In terms of biological role, catalyzes the attachment of threonine to tRNA(Thr) in a two-step reaction: L-threonine is first activated by ATP to form Thr-AMP and then transferred to the acceptor end of tRNA(Thr). Also edits incorrectly charged L-seryl-tRNA(Thr). The protein is Threonine--tRNA ligase of Streptococcus sanguinis (strain SK36).